The primary structure comprises 379 residues: uncharacterized protein (379 aa).

Position 29–36 (29–36 (GPLNSGKT)) interacts with ATP.

Belongs to the archaeal ATPase family.

This is an uncharacterized protein from Methanocaldococcus jannaschii (strain ATCC 43067 / DSM 2661 / JAL-1 / JCM 10045 / NBRC 100440) (Methanococcus jannaschii).